A 346-amino-acid polypeptide reads, in one-letter code: tRNA pseudouridine synthase D (346 aa).

Asp81 serves as the catalytic Nucleophile. The TRUD domain maps to Gly157 to Leu303.

The protein belongs to the pseudouridine synthase TruD family.

It catalyses the reaction uridine(13) in tRNA = pseudouridine(13) in tRNA. In terms of biological role, responsible for synthesis of pseudouridine from uracil-13 in transfer RNAs. The polypeptide is tRNA pseudouridine synthase D (Stutzerimonas stutzeri (strain A1501) (Pseudomonas stutzeri)).